The primary structure comprises 206 residues: High frequency lysogenization protein HflD homolog (206 aa).

Belongs to the HflD family.

It is found in the cytoplasm. The protein localises to the cell inner membrane. The chain is High frequency lysogenization protein HflD homolog from Pseudomonas aeruginosa (strain LESB58).